The sequence spans 90 residues: Probable Fe(2+)-trafficking protein (90 aa).

It belongs to the Fe(2+)-trafficking protein family.

In terms of biological role, could be a mediator in iron transactions between iron acquisition and iron-requiring processes, such as synthesis and/or repair of Fe-S clusters in biosynthetic enzymes. The polypeptide is Probable Fe(2+)-trafficking protein (Verminephrobacter eiseniae (strain EF01-2)).